Reading from the N-terminus, the 833-residue chain is Probable glucan 1,3-beta-glucosidase D (833 aa).

Over residues 1–33 (MPTHSRSRDRYGGRDSDREARYDYDYARRRYAT) the composition is skewed to basic and acidic residues. Residues 1 to 228 (MPTHSRSRDR…RKRQKKLAVV (228 aa)) form a disordered region. At 1-305 (MPTHSRSRDR…GGRPFWKRKR (305 aa)) the chain is on the cytoplasmic side. The segment covering 34–45 (DDDDDYDDDELE) has biased composition (acidic residues). Basic and acidic residues-rich tracts occupy residues 46-75 (HDLT…RDAE) and 97-172 (YGDD…ETAA). Over residues 183-196 (SASHLLSADALAKL) the composition is skewed to low complexity. Positions 200–217 (YEKEERRKREIAKDAAKA) are enriched in basic and acidic residues. The helical; Signal-anchor for type II membrane protein transmembrane segment at 306–326 (WIGLGALIIILVIVIPVAVVV) threads the bilayer. The Extracellular segment spans residues 327-833 (SKKHDNKSDP…PDFGDLPEYY (507 aa)). The disordered stretch occupies residues 331-353 (DNKSDPADSQGTSPGKSNLDGLS). N-linked (GlcNAc...) asparagine glycosylation is present at Asn-332. Polar residues predominate over residues 337–346 (ADSQGTSPGK). N-linked (GlcNAc...) asparagine glycans are attached at residues Asn-378, Asn-383, Asn-395, Asn-548, Asn-560, and Asn-569. The Proton donor role is filled by Glu-599. Asn-638, Asn-671, and Asn-691 each carry an N-linked (GlcNAc...) asparagine glycan. The active-site Nucleophile is the Glu-704.

Belongs to the glycosyl hydrolase 5 (cellulase A) family.

It is found in the cell membrane. The enzyme catalyses Successive hydrolysis of beta-D-glucose units from the non-reducing ends of (1-&gt;3)-beta-D-glucans, releasing alpha-glucose.. Functionally, glucosidase involved in the degradation of cellulosic biomass. Active on lichenan. In Aspergillus fumigatus (strain CBS 144.89 / FGSC A1163 / CEA10) (Neosartorya fumigata), this protein is Probable glucan 1,3-beta-glucosidase D (exgD).